Reading from the N-terminus, the 225-residue chain is Agamous-like MADS-box protein TM6 (225 aa).

The MADS-box domain occupies 1–61 (MGRGKIEIKR…GKFHEYTSPT (61 aa)). Positions 84 to 174 (YERMQENLRK…LLNFEAKCDD (91 aa)) constitute a K-box domain.

Expressed during flower development in stamens, petals and carpels. Expressed in fruits and seeds.

Its subcellular location is the nucleus. Its function is as follows. Probable transcription factor involved in flower development. This chain is Agamous-like MADS-box protein TM6, found in Vitis vinifera (Grape).